Here is a 152-residue protein sequence, read N- to C-terminus: Putative membrane protein insertion efficiency factor (152 aa).

Residues Ala-81 to Val-152 form a disordered region.

The protein belongs to the UPF0161 family.

It localises to the cell membrane. Could be involved in insertion of integral membrane proteins into the membrane. The protein is Putative membrane protein insertion efficiency factor of Frankia casuarinae (strain DSM 45818 / CECT 9043 / HFP020203 / CcI3).